The sequence spans 394 residues: Chalcone synthase (394 aa).

Cysteine 168 is a catalytic residue.

Belongs to the thiolase-like superfamily. Chalcone/stilbene synthases family.

The enzyme catalyses (E)-4-coumaroyl-CoA + 3 malonyl-CoA + 3 H(+) = 2',4,4',6'-tetrahydroxychalcone + 3 CO2 + 4 CoA. Its pathway is secondary metabolite biosynthesis; flavonoid biosynthesis. Functionally, the primary product of this enzyme is 4,2',4',6'-tetrahydroxychalcone (also termed naringenin-chalcone or chalcone) which can under specific conditions spontaneously isomerize into naringenin. The sequence is that of Chalcone synthase (CHS) from Raphanus sativus (Radish).